Reading from the N-terminus, the 523-residue chain is Sorting nexin-2 (523 aa).

Positions 1–104 (MAAEREPPPL…EPSPAVTPVT (104 aa)) are disordered. Composition is skewed to low complexity over residues 27 to 50 (LFTSTVSTLESSPSSPEPASLPAE) and 93 to 104 (SSEPSPAVTPVT). Phosphoserine is present on S97. T101 and T104 each carry phosphothreonine. S117 and S119 each carry phosphoserine. A PX domain is found at 140 to 269 (FDIEIGVSDP…QFLESSELPR (130 aa)). The a 1,2-diacyl-sn-glycero-3-phospho-(1D-myo-inositol-3-phosphate) site is built by R183, S185, K211, and R235. Residue S185 is modified to Phosphoserine. An interaction with RhoG region spans residues 260–523 (QFLESSELPR…AFLPEAKAIA (264 aa)). At S277 the chain carries Phosphoserine. The tract at residues 278 to 295 (GAGILRMVNKAADAVNKM) is membrane-binding amphipathic helix. Positions 299–523 (MNESDAWFEE…AFLPEAKAIA (225 aa)) constitute a BAR domain. The residue at position 473 (K473) is an N6-acetyllysine.

The protein belongs to the sorting nexin family. Predominantly forms heterodimers with BAR domain-containing sorting nexins SNX5, SNX6 and SNX32; can self-associate to form homodimers. The heterodimers are proposed to self-assemble into helical arrays on the membrane to stabilize and expand local membrane curvature underlying endosomal tubule formation. Thought to be a component of the originally described retromer complex (also called SNX-BAR retromer) which is a pentamer containing the heterotrimeric retromer cargo-selective complex (CSC), also described as vacuolar protein sorting subcomplex (VPS), and a heterodimeric membrane-deforming subcomplex formed between SNX1 or SNX2 and SNX5 or SNX6 (also called SNX-BAR subcomplex); the respective CSC and SNX-BAR subcomplexes associate with low affinity. Interacts with SNX5, SNX6, SNX32, VPS26A, VPS29, VPS35, FNBP1, KALRN, RHOG (GDP-bound form).

Its subcellular location is the early endosome membrane. It is found in the cell projection. It localises to the lamellipodium. Functionally, involved in several stages of intracellular trafficking. Interacts with membranes containing phosphatidylinositol 3-phosphate (PtdIns(3P)) or phosphatidylinositol 3,5-bisphosphate (PtdIns(3,5)P2). Acts in part as component of the retromer membrane-deforming SNX-BAR subcomplex. The SNX-BAR retromer mediates retrograde transport of cargo proteins from endosomes to the trans-Golgi network (TGN) and is involved in endosome-to-plasma membrane transport for cargo protein recycling. The SNX-BAR subcomplex functions to deform the donor membrane into a tubular profile called endosome-to-TGN transport carrier (ETC). Can sense membrane curvature and has in vitro vesicle-to-membrane remodeling activity. Required for retrograde endosome-to-TGN transport of TGN38. Promotes KALRN- and RHOG-dependent but retromer-independent membrane remodeling such as lamellipodium formation; the function is dependent on GEF activity of KALRN. This Macaca fascicularis (Crab-eating macaque) protein is Sorting nexin-2 (SNX2).